We begin with the raw amino-acid sequence, 196 residues long: Pyridoxal 5'-phosphate synthase subunit PdxT (196 aa).

Residue 46–48 participates in L-glutamine binding; that stretch reads GES. The Nucleophile role is filled by C78. Residues R105 and 134-135 contribute to the L-glutamine site; that span reads IR. Catalysis depends on charge relay system residues H170 and E172.

It belongs to the glutaminase PdxT/SNO family. As to quaternary structure, in the presence of PdxS, forms a dodecamer of heterodimers. Only shows activity in the heterodimer.

The catalysed reaction is aldehydo-D-ribose 5-phosphate + D-glyceraldehyde 3-phosphate + L-glutamine = pyridoxal 5'-phosphate + L-glutamate + phosphate + 3 H2O + H(+). The enzyme catalyses L-glutamine + H2O = L-glutamate + NH4(+). It functions in the pathway cofactor biosynthesis; pyridoxal 5'-phosphate biosynthesis. Its function is as follows. Catalyzes the hydrolysis of glutamine to glutamate and ammonia as part of the biosynthesis of pyridoxal 5'-phosphate. The resulting ammonia molecule is channeled to the active site of PdxS. The protein is Pyridoxal 5'-phosphate synthase subunit PdxT of Pelotomaculum thermopropionicum (strain DSM 13744 / JCM 10971 / SI).